We begin with the raw amino-acid sequence, 144 residues long: Large ribosomal subunit protein uL15 (144 aa).

Residues 1–53 are disordered; it reads MRLNTLSPAQGAKQAPKRVGRGIGSGLGKTGGRGHKGQNSRTGGGVRRGFEGG. The segment covering 21–31 has biased composition (gly residues); sequence RGIGSGLGKTG.

It belongs to the universal ribosomal protein uL15 family. In terms of assembly, part of the 50S ribosomal subunit.

Binds to the 23S rRNA. The protein is Large ribosomal subunit protein uL15 of Hamiltonella defensa subsp. Acyrthosiphon pisum (strain 5AT).